A 193-amino-acid polypeptide reads, in one-letter code: Frataxin, mitochondrial (193 aa).

Residues 1–72 (MIFNFLNKAS…KQQQQLSKSF (72 aa)) constitute a mitochondrion transit peptide.

The protein belongs to the frataxin family. As to quaternary structure, monomer. Oligomer.

It localises to the mitochondrion. The catalysed reaction is 4 Fe(2+) + O2 + 4 H(+) = 4 Fe(3+) + 2 H2O. Its function is as follows. Promotes the biosynthesis of heme as well as the assembly and repair of iron-sulfur clusters by delivering Fe(2+) to proteins involved in these pathways. May play a role in the protection against iron-catalyzed oxidative stress through its ability to catalyze the oxidation of Fe(2+) to Fe(3+). May be able to store large amounts of the metal in the form of a ferrihydrite mineral by oligomerization. The chain is Frataxin, mitochondrial (fxn) from Dictyostelium discoideum (Social amoeba).